The chain runs to 193 residues: Acyl carrier protein phosphodiesterase (193 aa).

Belongs to the AcpH family.

The catalysed reaction is holo-[ACP] + H2O = apo-[ACP] + (R)-4'-phosphopantetheine + H(+). In terms of biological role, converts holo-ACP to apo-ACP by hydrolytic cleavage of the phosphopantetheine prosthetic group from ACP. The protein is Acyl carrier protein phosphodiesterase of Escherichia coli O157:H7.